A 138-amino-acid chain; its full sequence is Odorant-binding protein 22 (138 aa).

The N-terminal stretch at 1 to 16 is a signal peptide; the sequence is MKVFIAVFALIAVAAA. Arg-30 is a (5Z,8Z,11Z,14Z)-eicosatetraenoate binding site. Positions 30 and 61 each coordinate (9Z)-hexadecenoate. Residues Arg-30 and Tyr-61 each coordinate (9Z,12Z)-octadecadienoate. 3 disulfide bridges follow: Cys-33–Cys-64, Cys-60–Cys-113, and Cys-103–Cys-122. Asn-127 carries an N-linked (GlcNAc...) asparagine glycan.

This sequence belongs to the PBP/GOBP family. In terms of assembly, monomer in solution. In terms of tissue distribution, high-level expression in female mouth parts, particularly in the proboscis (at protein level). Moderate-level expression in female antenna (at protein level). Expressed in testis but not in the accessory gland or ejaculatory duct (at protein level). Expressed in spermathecae (at protein level). Female salivary gland. Female chemosensory organs: antenna, palp and proboscis. Not detected in midgut.

Its subcellular location is the secreted. Its function is as follows. Involved in modulation of blood-feeding behavior and capacity in female mosquitoes. Required for normal oviposition. Required for normal fecundity and fertility of female and male mosquitoes. Required for normal expression of VGA1 gene, which encodes the egg yolk protein vitellogenin-A1. Involved in regulation of spermatozoa development. Required for normal female longevity when mosquitoes are maintained on regular sugar meal. Binds long chain fatty acids. (Microbial infection) Facilitates shedding of dengue virus type 2 particles into mosquito saliva. Does not affect dengue virus type 2 replication or infection prevalence in midgut and salivary glands at 14 days after blood feeding. Functionally, (Microbial infection) Facilitates shedding of Zika virus particles into mosquito saliva. Does not affect Zika virus replication or infection prevalence in midgut and salivary glands at 14 days after blood feeding. This Aedes aegypti (Yellowfever mosquito) protein is Odorant-binding protein 22.